The chain runs to 311 residues: MRVLLSLVVILFIINSAFAVKINIGRPTKSHKTIHHETWVEEQTDQFDNIKVGQLLGFKRSPNRPKLQIKSYDPLGVQIPTSFNAQTNWPNCTTISQIQNQARCGSCWAFGATESATDRLCIHNNENVQLSFMDMVTCDETDNGCEGGDAFSAWNWLRKQGAVSEECLPYTIPTCPPAQQPCLNFVNTPSCTKECQSNSSLIYSQDKHKMAKIYSFDSDEAIMQEIVTNGPVEACFTVFEDFLAYKSGVYVHTTGKDLGGHCVKLVGFGTLNGVDYYAANNQWTTSWGDNGTFLIKRGDCGISDDVVAGLP.

The first 19 residues, 1-19, serve as a signal peptide directing secretion; sequence MRVLLSLVVILFIINSAFA. The propeptide occupies 20–78; the sequence is VKINIGRPTKSHKTIHHETWVEEQTDQFDNIKVGQLLGFKRSPNRPKLQIKSYDPLGVQ. A glycan (N-linked (GlcNAc...) asparagine) is linked at Asn-91. Disulfide bonds link Cys-92-Cys-121, Cys-104-Cys-145, Cys-138-Cys-191, Cys-167-Cys-195, and Cys-175-Cys-182. Cys-107 is an active-site residue. Asn-198 carries N-linked (GlcNAc...) asparagine glycosylation. Catalysis depends on residues His-261 and Asn-281. Asn-290 carries an N-linked (GlcNAc...) asparagine glycan.

Belongs to the peptidase C1 family.

It is found in the lysosome. The catalysed reaction is Hydrolysis of proteins with broad specificity for peptide bonds. Preferentially cleaves -Arg-Arg-|-Xaa bonds in small molecule substrates (thus differing from cathepsin L). In addition to being an endopeptidase, shows peptidyl-dipeptidase activity, liberating C-terminal dipeptides.. Functionally, thiol protease which is believed to participate in intracellular degradation and turnover of proteins. The chain is Cathepsin B (ctsB) from Dictyostelium discoideum (Social amoeba).